The sequence spans 719 residues: Probable 1-deoxy-D-xylulose-5-phosphate synthase, chloroplastic (719 aa).

Residues 1 to 57 constitute a chloroplast transit peptide; it reads MALCAYAFPGILNRTVAVASDASKPTPLFSEWIHGTDLQFQFHQKLTQVKKRSRTVQ. Thiamine diphosphate-binding positions include His-145 and 186–188; that span reads GHS. Position 217 (Asp-217) interacts with Mg(2+). Thiamine diphosphate is bound by residues 218-219, Asn-246, Tyr-367, and Glu-449; that span reads GA. Asn-246 contacts Mg(2+).

This sequence belongs to the transketolase family. DXPS subfamily. Homodimer. It depends on Mg(2+) as a cofactor. Thiamine diphosphate is required as a cofactor.

The protein localises to the plastid. Its subcellular location is the chloroplast. The catalysed reaction is D-glyceraldehyde 3-phosphate + pyruvate + H(+) = 1-deoxy-D-xylulose 5-phosphate + CO2. Its pathway is metabolic intermediate biosynthesis; 1-deoxy-D-xylulose 5-phosphate biosynthesis; 1-deoxy-D-xylulose 5-phosphate from D-glyceraldehyde 3-phosphate and pyruvate: step 1/1. In terms of biological role, catalyzes the acyloin condensation reaction between C atoms 2 and 3 of pyruvate and glyceraldehyde 3-phosphate to yield 1-deoxy-D-xylulose-5-phosphate (DXP). In Capsicum annuum (Capsicum pepper), this protein is Probable 1-deoxy-D-xylulose-5-phosphate synthase, chloroplastic (TKT2).